The primary structure comprises 1066 residues: Vinculin (1066 aa).

Positions 1-835 (MPVFHTRTIE…GAVAKVREAF (835 aa)) are N-terminal globular head. Phosphoserine is present on serine 97. The tract at residues 168–208 (MTKMAKMIDERQQELTHQEHRVMLVNSMNTVKELLPVLISA) is talin-interaction. Lysine 173 carries the post-translational modification N6-acetyllysine. A run of 3 repeats spans residues 259 to 369 (ASKD…KVEN), 370 to 479 (AARK…KTNR), and 480 to 589 (AVAN…QMQE). The tract at residues 259-589 (ASKDTEAMKR…LKDLKTQMQE (331 aa)) is 3 X 112 AA tandem repeats. Phosphoserine occurs at positions 260, 272, 275, 290, 346, and 434. The residue at position 496 (lysine 496) is an N6-acetyllysine. At tyrosine 537 the chain carries Phosphotyrosine. Residues serine 574, serine 579, and serine 600 each carry the phosphoserine modification. 2 positions are modified to phosphothreonine: threonine 604 and threonine 672. Serine 721 bears the Phosphoserine mark. Positions 741-764 (MANIQPQMLVAGATSIARRANRIL) are interaction with ACTN4. Residues serine 795 and serine 809 each carry the phosphoserine modification. Tyrosine 822 carries the post-translational modification Phosphotyrosine. The segment at 836–878 (QPQEPDFPPPPPDLEQLRLTDELAPPKPPLPEGEVPPPRPPPP) is linker (Pro-rich). The segment at 857–887 (ELAPPKPPLPEGEVPPPRPPPPEEKDEEFPE) is disordered. Positions 860 to 876 (PPKPPLPEGEVPPPRPP) are enriched in pro residues. The C-terminal tail stretch occupies residues 879-1066 (EEKDEEFPEQ…RWVRKTPWYQ (188 aa)). Facilitates phospholipid membrane insertion stretches follow at residues 935–978 (RLVR…KRIR) and 1052–1066 (AGFTLRWVRKTPWYQ). Residue tyrosine 1065 is modified to Phosphotyrosine; by SRC-type Tyr-kinases.

The protein belongs to the vinculin/alpha-catenin family. As to quaternary structure, exhibits self-association properties. Part of a complex composed of THSD1, PTK2/FAK1, TLN1 and VCL. Interacts with APBB1IP, NRAP and TLN1. Interacts with CTNNB1 and this interaction is necessary for its localization to the cell-cell junctions and for its function in regulating cell surface expression of E-cadherin. Interacts with SORBS1. Interacts with SYNM. Interacts with CTNNA1. Binds to ACTN4; this interaction triggers conformational changes. Interacts with FLII. Post-translationally, phosphorylated; on serines, threonines and tyrosines. Phosphorylation on Tyr-1065 in activated platelets affects head-tail interactions and cell spreading but has no effect on actin binding nor on localization to focal adhesion plaques. Acetylated; mainly by myristic acid but also by a small amount of palmitic acid.

The protein localises to the cell membrane. It is found in the cell junction. It localises to the adherens junction. The protein resides in the focal adhesion. Its subcellular location is the cytoplasm. The protein localises to the cytoskeleton. It is found in the sarcolemma. It localises to the cell projection. The protein resides in the podosome. In terms of biological role, actin filament (F-actin)-binding protein involved in cell-matrix adhesion and cell-cell adhesion. Regulates cell-surface E-cadherin expression and potentiates mechanosensing by the E-cadherin complex. May also play important roles in cell morphology and locomotion. This is Vinculin from Rattus norvegicus (Rat).